The primary structure comprises 704 residues: Fibulin-1 (704 aa).

The signal sequence occupies residues 1–25; sequence MDKLRGARPLRLLLLLLALLPALRG. Disulfide bonds link Cys-33–Cys-59, Cys-34–Cys-66, Cys-47–Cys-67, Cys-76–Cys-107, Cys-89–Cys-108, Cys-110–Cys-134, Cys-111–Cys-141, Cys-124–Cys-142, Cys-181–Cys-191, Cys-187–Cys-200, Cys-202–Cys-215, Cys-221–Cys-234, Cys-228–Cys-243, Cys-249–Cys-261, Cys-267–Cys-280, Cys-274–Cys-289, Cys-295–Cys-307, Cys-313–Cys-326, Cys-320–Cys-335, Cys-342–Cys-355, Cys-361–Cys-374, Cys-368–Cys-383, Cys-385–Cys-398, Cys-404–Cys-416, Cys-412–Cys-425, Cys-427–Cys-440, Cys-446–Cys-455, Cys-451–Cys-464, Cys-466–Cys-480, Cys-486–Cys-499, Cys-495–Cys-508, Cys-510–Cys-524, Cys-530–Cys-543, Cys-537–Cys-552, and Cys-557–Cys-578. Anaphylatoxin-like domains lie at 33–74, 75–109, and 110–142; these read CCDK…LEEH, YCSD…KCCY, and CCLL…RACC. An N-linked (GlcNAc...) asparagine glycan is attached at Asn-96. In terms of domain architecture, EGF-like 1 spans 177–216; that stretch reads LHDGCRGGGPCSQQCRDTGSSYVCSCFVGYQLQPDGVNCE. Residues 217–262 form the EGF-like 2; calcium-binding domain; the sequence is DINECITGTHSCGIGQTCVNTLGSFRCQRDTSCGTGYELTDDSRCK. One can recognise an EGF-like 3; calcium-binding domain in the interval 263 to 308; that stretch reads DIDECETGTHNCPPDFICQNTPGSFRCRPKLQCMNGFIQDALGNCI. An EGF-like 4; calcium-binding domain is found at 309 to 356; that stretch reads DINECLSTNMPCPAGQICINTDGSYTCQRISPSCGRGYHLNEDGTRCV. In terms of domain architecture, EGF-like 5; calcium-binding spans 357-399; the sequence is DVDECSSSDQPCGEGHVCINGPGNYRCECKSGYSFDVISRTCI. Residues 357-441 are self-association and FN1-binding; that stretch reads DVDECSSSDQ…KLSSDGRSCE (85 aa). An EGF-like 6; calcium-binding domain is found at 400–441; the sequence is DINECRRYPGRLCAHKCENTPGSYYCTCTMGFKLSSDGRSCE. Residues 442-481 form the EGF-like 7; calcium-binding domain; that stretch reads DLNECESSPCSQECANVYGSYQCYCRRGFQLSDIDGISCE. The 44-residue stretch at 482–525 folds into the EGF-like 8; calcium-binding domain; the sequence is DIDECALPTGGHICSFRCINIPGSFQCTCPSTGYRLAPNARNCQ. Residues 526–579 enclose the EGF-like 9; calcium-binding domain; it reads DIDECVAETHNCSFNETCFNIQGGFRCLSLECPENYRKSGDTVRLEKTDTIRCI. Asn-536 and Asn-540 each carry an N-linked (GlcNAc...) asparagine glycan.

This sequence belongs to the fibulin family. In terms of assembly, homomultimerizes and interacts with various extracellular matrix components.

It is found in the secreted. Its subcellular location is the extracellular space. The protein localises to the extracellular matrix. Its function is as follows. Incorporated into fibronectin-containing matrix fibers. May play a role in cell adhesion and migration along protein fibers within the extracellular matrix (ECM). Could be important for certain developmental processes and contribute to the supramolecular organization of ECM architecture, in particular to those of basement membranes. In Gallus gallus (Chicken), this protein is Fibulin-1 (FBLN1).